A 557-amino-acid polypeptide reads, in one-letter code: 6-methylpretetramide 4-monooxygenase (557 aa).

FAD contacts are provided by residues Gln-9–Arg-38 and Met-278–Asp-288. The interval Leu-530–Glu-557 is disordered.

Belongs to the PheA/TfdB FAD monooxygenase family. It depends on FAD as a cofactor.

The catalysed reaction is 6-methylpretetramide + NADPH + O2 + 2 H(+) = 4-hydroxy-6-methylpretetramide + NADP(+) + H2O. It carries out the reaction 4-hydroxy-6-methylpretetramide + NADPH + O2 = 4-dedimethylamino-4-oxo-anhydrotetracycline + NADP(+) + H2O. Its pathway is antibiotic biosynthesis; oxytetracycline biosynthesis. Its function is as follows. Involved in the biosynthesis of the tetracycline antibiotic, oxytetracycline. Catalyzes the double hydroxylation of 6-methylpretetramide to yield 4-keto-anhydrotetracycline, via the insertion of oxygen atoms at the C-12a and C-4 positions of 6-pretetramid. This chain is 6-methylpretetramide 4-monooxygenase, found in Streptomyces rimosus.